The chain runs to 202 residues: Hydrogenase expression/formation protein HoxM (202 aa).

The Ni(2+) site is built by Glu15, Asp61, and His92.

This sequence belongs to the peptidase A31 family.

In terms of biological role, absolutely required for hydrogenase activity. Mediates the attachment of hydrogenase to the bacterial membrane; attachment is a requirement for enzymatic activity. The polypeptide is Hydrogenase expression/formation protein HoxM (hoxM) (Cupriavidus necator (strain ATCC 17699 / DSM 428 / KCTC 22496 / NCIMB 10442 / H16 / Stanier 337) (Ralstonia eutropha)).